A 98-amino-acid chain; its full sequence is Ribonuclease kappa (98 aa).

The next 2 membrane-spanning stretches (helical) occupy residues 13–33 (ACGI…GIFF) and 65–85 (VSYN…FSFC).

The protein belongs to the RNase K family. Interacts with the proton translocation complex V0 of the V-ATPase. Interacts with ATP6AP1.

The protein localises to the endomembrane system. Its subcellular location is the cytoplasmic vesicle. It is found in the clathrin-coated vesicle membrane. Endoribonuclease which preferentially cleaves ApU and ApG phosphodiester bonds. Hydrolyzes UpU bonds at a lower rate. Regulates the activity of vacuolar (H+)-ATPase (V-ATPase) which is responsible for acidifying and maintaining the pH of intracellular compartments. Required at an early stage of receptor-mediated endocytosis. This is Ribonuclease kappa (Rnasek) from Mus musculus (Mouse).